We begin with the raw amino-acid sequence, 527 residues long: GMP synthase [glutamine-hydrolyzing] (527 aa).

The region spanning Lys19–Asp212 is the Glutamine amidotransferase type-1 domain. Cys96 acts as the Nucleophile in catalysis. Residues His186 and Glu188 contribute to the active site. One can recognise a GMPS ATP-PPase domain in the interval Trp213–Arg402. Ser240–Ser246 serves as a coordination point for ATP.

Homodimer.

The enzyme catalyses XMP + L-glutamine + ATP + H2O = GMP + L-glutamate + AMP + diphosphate + 2 H(+). It participates in purine metabolism; GMP biosynthesis; GMP from XMP (L-Gln route): step 1/1. Catalyzes the synthesis of GMP from XMP. In Streptococcus thermophilus (strain ATCC BAA-250 / LMG 18311), this protein is GMP synthase [glutamine-hydrolyzing].